We begin with the raw amino-acid sequence, 1059 residues long: Probable sucrose-phosphate synthase (1059 aa).

Disordered regions lie at residues Ala95–Arg145, Arg671–Leu695, Asp710–Asp731, and Ser748–Phe769. Residues Arg102–Thr114 show a composition bias toward basic and acidic residues. Residues Gly681 to Pro691 are compositionally biased toward acidic residues.

It belongs to the glycosyltransferase 1 family. Homodimer or homotetramer.

It carries out the reaction beta-D-fructose 6-phosphate + UDP-alpha-D-glucose = sucrose 6(F)-phosphate + UDP + H(+). The protein operates within glycan biosynthesis; sucrose biosynthesis; sucrose from D-fructose 6-phosphate and UDP-alpha-D-glucose: step 1/2. Activity is regulated by phosphorylation and moderated by concentration of metabolites and light. Plays a role in photosynthetic sucrose synthesis by catalyzing the rate-limiting step of sucrose biosynthesis from UDP-glucose and fructose- 6-phosphate. Involved in the regulation of carbon partitioning in the leaves of plants. May regulate the synthesis of sucrose and therefore play a major role as a limiting factor in the export of photoassimilates out of the leaf. Plays a role for sucrose availability that is essential for plant growth and fiber elongation. This chain is Probable sucrose-phosphate synthase (SPS), found in Vicia faba (Broad bean).